The primary structure comprises 500 residues: Glutamyl-tRNA(Gln) amidotransferase subunit A (500 aa).

Residues lysine 93 and serine 168 each act as charge relay system in the active site. The Acyl-ester intermediate role is filled by serine 192.

It belongs to the amidase family. GatA subfamily. As to quaternary structure, heterotrimer of A, B and C subunits.

It catalyses the reaction L-glutamyl-tRNA(Gln) + L-glutamine + ATP + H2O = L-glutaminyl-tRNA(Gln) + L-glutamate + ADP + phosphate + H(+). Allows the formation of correctly charged Gln-tRNA(Gln) through the transamidation of misacylated Glu-tRNA(Gln) in organisms which lack glutaminyl-tRNA synthetase. The reaction takes place in the presence of glutamine and ATP through an activated gamma-phospho-Glu-tRNA(Gln). This Corynebacterium jeikeium (strain K411) protein is Glutamyl-tRNA(Gln) amidotransferase subunit A.